Consider the following 204-residue polypeptide: Large ribosomal subunit protein uL4 (204 aa).

A disordered region spans residues 53–74; that stretch reads AYVSGGGKKPWRQKGRGGARAG.

It belongs to the universal ribosomal protein uL4 family. As to quaternary structure, part of the 50S ribosomal subunit.

Its function is as follows. One of the primary rRNA binding proteins, this protein initially binds near the 5'-end of the 23S rRNA. It is important during the early stages of 50S assembly. It makes multiple contacts with different domains of the 23S rRNA in the assembled 50S subunit and ribosome. Functionally, forms part of the polypeptide exit tunnel. The polypeptide is Large ribosomal subunit protein uL4 (Campylobacter curvus (strain 525.92)).